Here is a 276-residue protein sequence, read N- to C-terminus: Thiazole synthase (276 aa).

Lysine 112 (schiff-base intermediate with DXP) is an active-site residue. Residues glycine 173, 199–200 (AG), and 221–222 (NT) contribute to the 1-deoxy-D-xylulose 5-phosphate site.

The protein belongs to the ThiG family. As to quaternary structure, homotetramer. Forms heterodimers with either ThiH or ThiS.

It is found in the cytoplasm. It carries out the reaction [ThiS sulfur-carrier protein]-C-terminal-Gly-aminoethanethioate + 2-iminoacetate + 1-deoxy-D-xylulose 5-phosphate = [ThiS sulfur-carrier protein]-C-terminal Gly-Gly + 2-[(2R,5Z)-2-carboxy-4-methylthiazol-5(2H)-ylidene]ethyl phosphate + 2 H2O + H(+). It functions in the pathway cofactor biosynthesis; thiamine diphosphate biosynthesis. Its function is as follows. Catalyzes the rearrangement of 1-deoxy-D-xylulose 5-phosphate (DXP) to produce the thiazole phosphate moiety of thiamine. Sulfur is provided by the thiocarboxylate moiety of the carrier protein ThiS. In vitro, sulfur can be provided by H(2)S. The sequence is that of Thiazole synthase from Synechococcus sp. (strain ATCC 27144 / PCC 6301 / SAUG 1402/1) (Anacystis nidulans).